Reading from the N-terminus, the 526-residue chain is Tyrosine 2,3-aminomutase (526 aa).

The active-site Proton donor/acceptor is Tyr-41. His-71 serves as a coordination point for substrate. The 5-imidazolinone (Ala-Gly) cross-link spans 130–132 (ASG). Ser-131 bears the 2,3-didehydroalanine (Ser) mark. Substrate is bound by residues Asn-183 and Arg-288.

This sequence belongs to the TAL/TAM family. Homotetramer; dimer of dimers. In terms of processing, contains an active site 4-methylidene-imidazol-5-one (MIO), which is formed autocatalytically by cyclization and dehydration of residues Ala-Ser-Gly.

It carries out the reaction L-tyrosine = 3-amino-3-(4-hydroxyphenyl)propanoate. It catalyses the reaction L-tyrosine = (E)-4-coumarate + NH4(+). Functionally, has aminomutase and, to a much lesser extent, ammonia-lyase activity. Primarily, catalyzes the rearrangement of L-tyrosine to S-beta-tyrosine, which is probably incorporated into secondary metabolite myxovalargin. The aminomutase activity exclusively produces S-beta-tyrosine. This Myxococcus fulvus protein is Tyrosine 2,3-aminomutase.